The sequence spans 728 residues: Polyribonucleotide nucleotidyltransferase (728 aa).

D487 and D493 together coordinate Mg(2+). The KH domain occupies 554–613 (PRIEVITVPTDKIREVIGTGGKVIREIVEKTGAKVDISDDGTIKVASSDGESIRKAIAWI). Residues 623-691 (GKIYEGTVVK…DRGKVRLSMK (69 aa)) form the S1 motif domain. Acidic residues predominate over residues 697–707 (TGEEIVYENEP). Residues 697–728 (TGEEIVYENEPAEQPREKREGGGGRGRRRERD) are disordered. A compositionally biased stretch (basic and acidic residues) spans 709–718 (EQPREKREGG).

The protein belongs to the polyribonucleotide nucleotidyltransferase family. Requires Mg(2+) as cofactor.

Its subcellular location is the cytoplasm. It carries out the reaction RNA(n+1) + phosphate = RNA(n) + a ribonucleoside 5'-diphosphate. Its function is as follows. Involved in mRNA degradation. Catalyzes the phosphorolysis of single-stranded polyribonucleotides processively in the 3'- to 5'-direction. In Parvibaculum lavamentivorans (strain DS-1 / DSM 13023 / NCIMB 13966), this protein is Polyribonucleotide nucleotidyltransferase.